We begin with the raw amino-acid sequence, 350 residues long: fMet-Leu-Phe receptor (350 aa).

Over 1–27 the chain is Extracellular; it reads METNSSLPTNISGGTPAVSAGYLFLDI. Asn-4 and Asn-10 each carry an N-linked (GlcNAc...) asparagine glycan. Residues 28-50 traverse the membrane as a helical segment; that stretch reads ITYLVFAVTFVLGVLGNGLVIWV. At 51–61 the chain is on the cytoplasmic side; sequence AGFRMTHTVTT. A helical transmembrane segment spans residues 62–83; that stretch reads ISYLNLAVADFCFTSTLPFFMV. Residues 84-100 are Extracellular-facing; the sequence is RKAMGGHWPFGWFLCKF. Cys-98 and Cys-176 are disulfide-bonded. A helical membrane pass occupies residues 101-121; it reads VFTIVDINLFGSVFLIALIAL. Over 122–140 the chain is Cytoplasmic; the sequence is DRCVCVLHPVWTQNHRTVS. A helical membrane pass occupies residues 141 to 162; it reads LAKKVIIGPWVMALLLTLPVII. The Extracellular segment spans residues 163–205; it reads RVTTVPGKTGTVACTFNFSPWTNDPKERINVAVAMLTVRGIIR. A helical membrane pass occupies residues 206–226; the sequence is FIIGFSAPMSIVAVSYGLIAT. The Cytoplasmic segment spans residues 227–242; sequence KIHKQGLIKSSRPLRV. Residues 243–266 traverse the membrane as a helical segment; the sequence is LSFVAAAFFLCWSPYQVVALIATV. Residues 267-285 lie on the Extracellular side of the membrane; sequence RIRELLQGMYKEIGIAVDV. The chain crosses the membrane as a helical span at residues 286–305; sequence TSALAFFNSCLNPMLYVFMG. Over 306 to 350 the chain is Cytoplasmic; it reads QDFRERLIHALPASLERALTEDSTQTSDTATNSTLPSAEVELQAK. Residues 325–350 form a disordered region; it reads TEDSTQTSDTATNSTLPSAEVELQAK. The span at 326 to 341 shows a compositional bias: polar residues; it reads EDSTQTSDTATNSTLP. Ser-328 bears the Phosphoserine mark. 2 positions are modified to phosphothreonine: Thr-329 and Thr-331. Residue Ser-332 is modified to Phosphoserine. A phosphothreonine mark is found at Thr-334 and Thr-336. A Phosphoserine modification is found at Ser-338. Thr-339 bears the Phosphothreonine mark.

This sequence belongs to the G-protein coupled receptor 1 family. As to quaternary structure, interacts with S.aureus chemotaxis inhibitory protein (CHIPS); the interaction blocks the receptor and may thus inhibit the immune response. Phosphorylated; which is necessary for desensitization. Neutrophils.

It localises to the cell membrane. In terms of biological role, high affinity receptor for N-formyl-methionyl peptides (fMLP), which are powerful neutrophil chemotactic factors. Binding of fMLP to the receptor stimulates intracellular calcium mobilization and superoxide anion release. This response is mediated via a G-protein that activates a phosphatidylinositol-calcium second messenger system. Receptor for TAFA4, mediates its effects on chemoattracting macrophages, promoting phagocytosis and increasing ROS release. Receptor for cathepsin CTSG, leading to increased phagocyte chemotaxis. In Homo sapiens (Human), this protein is fMet-Leu-Phe receptor (FPR1).